Consider the following 428-residue polypeptide: Immunoglobulin superfamily containing leucine-rich repeat protein (428 aa).

The signal sequence occupies residues 1–18 (MQELHLLWWALLLGLAQA). The region spanning 19–50 (CPEPCDCGEKYGFQIADCAYRDLEAVPPGFPA) is the LRRNT domain. Asparagine 51 is a glycosylation site (N-linked (GlcNAc...) asparagine). LRR repeat units follow at residues 51–72 (NVTALSLSANRLPGLPEGAFRE), 75–96 (LLQSLWLAHNEIRMVAAGALAS), 99–122 (HLKSLDLSHNLISDFAWSDLHNLS), 123–144 (ALQLLKMDSNELTFIPRDAFRS), and 147–168 (ALRSLQLNHNRLHTLAEGTFTP). Residues 180 to 231 (NPFDCTCGIVWLKTWALATAVSIPEQDNIACTSPHVLKGTPLSRLPPLPCSA) form the LRRCT domain. The Ig-like domain occupies 232–343 (PSVQLSYQPS…GSAESSVDVA (112 aa)). Cysteines 257 and 327 form a disulfide. Residue asparagine 309 is glycosylated (N-linked (GlcNAc...) asparagine).

The protein localises to the secreted. This is Immunoglobulin superfamily containing leucine-rich repeat protein (ISLR) from Pongo abelii (Sumatran orangutan).